A 259-amino-acid polypeptide reads, in one-letter code: Phosphatidylglycerol--prolipoprotein diacylglyceryl transferase (259 aa).

A run of 4 helical transmembrane segments spans residues 16-36 (LAISWYSLSYVIGILLGWFYA), 55-75 (FITYAVIGIIVGGRLGFVLLY), 92-112 (EGGMSFHGGALGGIIAAYLFC), and 117-137 (INFLSLTDIIAPVVPIGLFLG). Arg-138 serves as a coordination point for a 1,2-diacyl-sn-glycero-3-phospho-(1'-sn-glycerol). A run of 3 helical transmembrane segments spans residues 172 to 192 (QLYEAFFEGLVLFSILAYATF), 201 to 221 (GLNSGIFFTFYGLFRITIEIF), and 228 to 248 (IGFILDSLTMGQILSVPMLLL).

Belongs to the Lgt family.

Its subcellular location is the cell inner membrane. It carries out the reaction L-cysteinyl-[prolipoprotein] + a 1,2-diacyl-sn-glycero-3-phospho-(1'-sn-glycerol) = an S-1,2-diacyl-sn-glyceryl-L-cysteinyl-[prolipoprotein] + sn-glycerol 1-phosphate + H(+). It participates in protein modification; lipoprotein biosynthesis (diacylglyceryl transfer). Its function is as follows. Catalyzes the transfer of the diacylglyceryl group from phosphatidylglycerol to the sulfhydryl group of the N-terminal cysteine of a prolipoprotein, the first step in the formation of mature lipoproteins. This is Phosphatidylglycerol--prolipoprotein diacylglyceryl transferase from Rickettsia rickettsii (strain Iowa).